The chain runs to 193 residues: Transforming protein RhoA (193 aa).

GTP-binding positions include 12–19, 30–37, 59–63, and 117–120; these read GDGACGKT, FPEVYVPT, DTAGQ, and NKKD. Residues 34 to 42 carry the Effector region motif; sequence YVPTVFENY. The tract at residues 61–78 is switch II region; involved in RAP1GDS1 isoform 3 binding; the sequence is AGQEDYDRLRPLSYPDTD. Residue Gln63 is modified to 5-glutamyl serotonin. A Glycyl lysine isopeptide (Lys-Gly) (interchain with G-Cter in ubiquitin) cross-link involves residue Lys135. Residue 160–162 participates in GTP binding; it reads SAK. Ser188 carries the post-translational modification Phosphoserine; by PKG/PRKG1. Cys190 is modified (cysteine methyl ester). Residue Cys190 is the site of S-geranylgeranyl cysteine attachment. A propeptide spans 191–193 (removed in mature form); that stretch reads LIL.

It belongs to the small GTPase superfamily. Rho family. As to quaternary structure, interacts with ARHGEF28. Interacts (via GTP-bound form) with RIPOR1 (via N-terminus); this interaction links RHOA to STK24 and STK26 kinases. Interacts with RIPOR2 (via active GTP- or inactive GDP-bound forms) isoform 1 and isoform 2; these interactions are direct, block the loading of GTP to RHOA and decrease upon chemokine CCL19 stimulation in primary T lymphocytes. Binds PRKCL1, ROCK1 and ROCK2. Interacts with ARHGEF2, ARHGEF3, NET1 and RTKN. Interacts with PLCE1 and AKAP13. Interacts with DIAPH1. Interacts (in the constitutively activated, GTP-bound form) with DGKQ. Interacts with RACK1; enhances RHOA activation. Interacts with PKP4; the interaction is detected at the midbody. Interacts (GTP-bound form preferentially) with PKN2; the interaction stimulates autophosphorylation and phosphorylation of PKN2. Interacts with ARHGDIA; this interaction inactivates and stabilizes RHOA. Interacts with ARHGDIB. Interacts (GTP-bound form) with KCNA2 (via cytoplasmic N-terminal domain). Interacts (GTP-bound form) with ECT2; the interaction results in allosteric activation of ECT2. Interacts with RAP1GDS1; the interaction is direct and in a 1:1 stoichiometry. Post-translationally, ubiquitinated by the BCR(KCTD13) and BCR(TNFAIP1) E3 ubiquitin ligase complexes, leading to its degradation by the proteasome, thereby regulating the actin cytoskeleton and synaptic transmission in neurons. Ubiquitinated at Lys-135 in a FBXL19-mediated manner; leading to proteasomal degradation. Phosphorylation by PRKG1 at Ser-188 inactivates RHOA signaling. Phosphorylation by SLK at Ser-188 in response to AGTR2 activation. In terms of processing, serotonylation of Gln-63 by TGM2 during activation and aggregation of platelets leads to constitutive activation of GTPase activity.

The protein resides in the cell membrane. The protein localises to the cytoplasm. It localises to the cytoskeleton. Its subcellular location is the cleavage furrow. It is found in the cell cortex. The protein resides in the midbody. The protein localises to the cell projection. It localises to the lamellipodium. Its subcellular location is the dendrite. It is found in the nucleus. It carries out the reaction GTP + H2O = GDP + phosphate + H(+). Its activity is regulated as follows. Regulated by guanine nucleotide exchange factors (GEFs) which promote the exchange of bound GDP for free GTP, GTPase activating proteins (GAPs) which increase the GTP hydrolysis activity and GDP dissociation inhibitors which inhibit the dissociation of the nucleotide from the GTPase. Activated by GEFs such as ARHGEF2, ARHGEF3, ARHGEF28 and BCR. Inhibited by GAPs such as ARHGAP30. Inhibited by GDP dissociation inhibitors such as ARHGDIA. Small GTPase which cycles between an active GTP-bound and an inactive GDP-bound state. Mainly associated with cytoskeleton organization, in active state binds to a variety of effector proteins to regulate cellular responses such as cytoskeletal dynamics, cell migration and cell cycle. Regulates a signal transduction pathway linking plasma membrane receptors to the assembly of focal adhesions and actin stress fibers. Involved in a microtubule-dependent signal that is required for the myosin contractile ring formation during cell cycle cytokinesis. Plays an essential role in cleavage furrow formation. Required for the apical junction formation of keratinocyte cell-cell adhesion. Essential for the SPATA13-mediated regulation of cell migration and adhesion assembly and disassembly. The MEMO1-RHOA-DIAPH1 signaling pathway plays an important role in ERBB2-dependent stabilization of microtubules at the cell cortex. It controls the localization of APC and CLASP2 to the cell membrane, via the regulation of GSK3B activity. In turn, membrane-bound APC allows the localization of the MACF1 to the cell membrane, which is required for microtubule capture and stabilization. Regulates KCNA2 potassium channel activity by reducing its location at the cell surface in response to CHRM1 activation; promotes KCNA2 endocytosis. Acts as an allosteric activator of guanine nucleotide exchange factor ECT2 by binding in its activated GTP-bound form to the PH domain of ECT2 which stimulates the release of PH inhibition and promotes the binding of substrate RHOA to the ECT2 catalytic center. May be an activator of PLCE1. In neurons, involved in the inhibition of the initial spine growth. Upon activation by CaMKII, modulates dendritic spine structural plasticity by relaying CaMKII transient activation to synapse-specific, long-term signaling. Acts as a regulator of platelet alpha-granule release during activation and aggregation of platelets. When activated by DAAM1 may signal centrosome maturation and chromosomal segregation during cell division. May also be involved in contractile ring formation during cytokinesis. In Mus musculus (Mouse), this protein is Transforming protein RhoA (Rhoa).